A 111-amino-acid chain; its full sequence is uncharacterized protein (111 aa).

This is an uncharacterized protein from Bacillus subtilis (strain 168).